Reading from the N-terminus, the 173-residue chain is dCTP deaminase, dUMP-forming (173 aa).

DCTP-binding positions include 93 to 98 (RSSIGR), Asp-111, 119 to 121 (TLE), Gln-138, and Tyr-151. Glu-121 functions as the Proton donor/acceptor in the catalytic mechanism.

The protein belongs to the dCTP deaminase family. Homotrimer.

The enzyme catalyses dCTP + 2 H2O = dUMP + NH4(+) + diphosphate. It participates in pyrimidine metabolism; dUMP biosynthesis; dUMP from dCTP: step 1/1. Its function is as follows. Bifunctional enzyme that catalyzes both the deamination of dCTP to dUTP and the hydrolysis of dUTP to dUMP without releasing the toxic dUTP intermediate. The sequence is that of dCTP deaminase, dUMP-forming from Cytophaga hutchinsonii (strain ATCC 33406 / DSM 1761 / CIP 103989 / NBRC 15051 / NCIMB 9469 / D465).